The chain runs to 207 residues: Segregation and condensation protein B (207 aa).

A disordered region spans residues 173–207 (DDTAESDNDSADLYYRQFEQTLNETGPETAPKGEQ).

It belongs to the ScpB family. In terms of assembly, homodimer. Homodimerization may be required to stabilize the binding of ScpA to the Smc head domains. Component of a cohesin-like complex composed of ScpA, ScpB and the Smc homodimer, in which ScpA and ScpB bind to the head domain of Smc. The presence of the three proteins is required for the association of the complex with DNA.

It localises to the cytoplasm. Functionally, participates in chromosomal partition during cell division. May act via the formation of a condensin-like complex containing Smc and ScpA that pull DNA away from mid-cell into both cell halves. This Latilactobacillus sakei subsp. sakei (strain 23K) (Lactobacillus sakei subsp. sakei) protein is Segregation and condensation protein B.